The primary structure comprises 162 residues: NADH-quinone oxidoreductase subunit I (162 aa).

4Fe-4S ferredoxin-type domains follow at residues 54–83 (RRYE…IESE) and 93–122 (TRYD…ETQI). Residues C63, C66, C69, C73, C102, C105, C108, and C112 each coordinate [4Fe-4S] cluster.

Belongs to the complex I 23 kDa subunit family. As to quaternary structure, NDH-1 is composed of 14 different subunits. Subunits NuoA, H, J, K, L, M, N constitute the membrane sector of the complex. Requires [4Fe-4S] cluster as cofactor.

It is found in the cell inner membrane. It catalyses the reaction a quinone + NADH + 5 H(+)(in) = a quinol + NAD(+) + 4 H(+)(out). Functionally, NDH-1 shuttles electrons from NADH, via FMN and iron-sulfur (Fe-S) centers, to quinones in the respiratory chain. The immediate electron acceptor for the enzyme in this species is believed to be ubiquinone. Couples the redox reaction to proton translocation (for every two electrons transferred, four hydrogen ions are translocated across the cytoplasmic membrane), and thus conserves the redox energy in a proton gradient. In Burkholderia cenocepacia (strain HI2424), this protein is NADH-quinone oxidoreductase subunit I.